The chain runs to 208 residues: dITP/XTP pyrophosphatase (208 aa).

Position 17–22 (17–22) interacts with substrate; the sequence is SNNPGK. Mg(2+) is bound by residues aspartate 49 and aspartate 78. The Proton acceptor role is filled by aspartate 78. Residues serine 79, 164–167, lysine 187, and 192–193 each bind substrate; these read FGYD and HR.

Belongs to the HAM1 NTPase family. Homodimer. It depends on Mg(2+) as a cofactor.

It catalyses the reaction XTP + H2O = XMP + diphosphate + H(+). It carries out the reaction dITP + H2O = dIMP + diphosphate + H(+). The catalysed reaction is ITP + H2O = IMP + diphosphate + H(+). In terms of biological role, pyrophosphatase that catalyzes the hydrolysis of nucleoside triphosphates to their monophosphate derivatives, with a high preference for the non-canonical purine nucleotides XTP (xanthosine triphosphate), dITP (deoxyinosine triphosphate) and ITP. Seems to function as a house-cleaning enzyme that removes non-canonical purine nucleotides from the nucleotide pool, thus preventing their incorporation into DNA/RNA and avoiding chromosomal lesions. This Burkholderia pseudomallei (strain K96243) protein is dITP/XTP pyrophosphatase.